A 466-amino-acid polypeptide reads, in one-letter code: Dihydrolipoyl dehydrogenase (466 aa).

FAD-binding positions include 34–42 (ERVHLGGIC), K51, and G114. Residues C42 and C47 are joined by a disulfide bond. Residues 180 to 184 (GSGAI), E203, and 269 to 272 (AIGV) each bind NAD(+). 2 residues coordinate FAD: D311 and A319. Residue H445 is the Proton acceptor of the active site.

It belongs to the class-I pyridine nucleotide-disulfide oxidoreductase family. As to quaternary structure, homodimer. The cofactor is FAD.

The protein resides in the cytoplasm. It carries out the reaction N(6)-[(R)-dihydrolipoyl]-L-lysyl-[protein] + NAD(+) = N(6)-[(R)-lipoyl]-L-lysyl-[protein] + NADH + H(+). Functionally, lipoamide dehydrogenase is a component of the alpha-ketoacid dehydrogenase complexes. This is Dihydrolipoyl dehydrogenase (lpd) from Zymomonas mobilis subsp. mobilis (strain ATCC 31821 / ZM4 / CP4).